The sequence spans 563 residues: Arginine--tRNA ligase (563 aa).

The 'HIGH' region signature appears at 121-131; it reads PNIAKPFSIGH.

The protein belongs to the class-I aminoacyl-tRNA synthetase family. Monomer.

The protein resides in the cytoplasm. The enzyme catalyses tRNA(Arg) + L-arginine + ATP = L-arginyl-tRNA(Arg) + AMP + diphosphate. The protein is Arginine--tRNA ligase of Streptococcus equi subsp. equi (strain 4047).